Consider the following 163-residue polypeptide: Phosphopantetheine adenylyltransferase (163 aa).

A substrate-binding site is contributed by Ser-10. Residues 10–11 (SF) and His-18 contribute to the ATP site. The substrate site is built by Lys-42, Leu-74, and Arg-88. ATP-binding positions include 89–91 (GLR), Glu-99, and 124–130 (YSFLSSS).

This sequence belongs to the bacterial CoaD family. As to quaternary structure, homohexamer. Requires Mg(2+) as cofactor.

The protein resides in the cytoplasm. The enzyme catalyses (R)-4'-phosphopantetheine + ATP + H(+) = 3'-dephospho-CoA + diphosphate. Its pathway is cofactor biosynthesis; coenzyme A biosynthesis; CoA from (R)-pantothenate: step 4/5. In terms of biological role, reversibly transfers an adenylyl group from ATP to 4'-phosphopantetheine, yielding dephospho-CoA (dPCoA) and pyrophosphate. The polypeptide is Phosphopantetheine adenylyltransferase (Bacillus anthracis (strain A0248)).